Consider the following 702-residue polypeptide: Elongation factor G (702 aa).

The tr-type G domain maps to 8–286 (DKVRNIGIIA…AVVEYLPSPL (279 aa)). Residues 17–24 (AHIDAGKT), 85–89 (DTPGH), and 139–142 (NKMD) each bind GTP.

It belongs to the TRAFAC class translation factor GTPase superfamily. Classic translation factor GTPase family. EF-G/EF-2 subfamily.

It localises to the cytoplasm. In terms of biological role, catalyzes the GTP-dependent ribosomal translocation step during translation elongation. During this step, the ribosome changes from the pre-translocational (PRE) to the post-translocational (POST) state as the newly formed A-site-bound peptidyl-tRNA and P-site-bound deacylated tRNA move to the P and E sites, respectively. Catalyzes the coordinated movement of the two tRNA molecules, the mRNA and conformational changes in the ribosome. This is Elongation factor G from Chloroflexus aurantiacus (strain ATCC 29366 / DSM 635 / J-10-fl).